A 445-amino-acid chain; its full sequence is Exodeoxyribonuclease 7 large subunit (445 aa).

The protein belongs to the XseA family. As to quaternary structure, heterooligomer composed of large and small subunits.

Its subcellular location is the cytoplasm. It catalyses the reaction Exonucleolytic cleavage in either 5'- to 3'- or 3'- to 5'-direction to yield nucleoside 5'-phosphates.. Functionally, bidirectionally degrades single-stranded DNA into large acid-insoluble oligonucleotides, which are then degraded further into small acid-soluble oligonucleotides. The protein is Exodeoxyribonuclease 7 large subunit of Shewanella pealeana (strain ATCC 700345 / ANG-SQ1).